The chain runs to 241 residues: Ribonuclease PH (241 aa).

Phosphate-binding positions include R89 and 127 to 129; that span reads GTR.

Belongs to the RNase PH family. As to quaternary structure, homohexameric ring arranged as a trimer of dimers.

It catalyses the reaction tRNA(n+1) + phosphate = tRNA(n) + a ribonucleoside 5'-diphosphate. In terms of biological role, phosphorolytic 3'-5' exoribonuclease that plays an important role in tRNA 3'-end maturation. Removes nucleotide residues following the 3'-CCA terminus of tRNAs; can also add nucleotides to the ends of RNA molecules by using nucleoside diphosphates as substrates, but this may not be physiologically important. Probably plays a role in initiation of 16S rRNA degradation (leading to ribosome degradation) during starvation. In Xanthomonas oryzae pv. oryzae (strain MAFF 311018), this protein is Ribonuclease PH.